Here is a 170-residue protein sequence, read N- to C-terminus: Myosin regulatory light chain 2, skeletal muscle isoform type 1 (170 aa).

At Ala-2 the chain carries N,N,N-trimethylalanine. Phosphoserine is present on residues Ser-16 and Ser-17. A phosphothreonine mark is found at Thr-26 and Thr-36. The EF-hand 1 domain maps to 26 to 61; the sequence is TQIQEFKEAFTVIDQNRDGIIDKEDLRDTFAAMGRL. 4 residues coordinate Ca(2+): Asp-39, Asn-41, Asp-43, and Asp-50. Ser-76 bears the Phosphoserine mark. 2 EF-hand domains span residues 96-131 and 132-167; these read DPED…QCDR and FSQE…GDAK. Thr-102 bears the Phosphothreonine mark.

In terms of assembly, myosin is a hexamer of 2 heavy chains and 4 light chains.

The polypeptide is Myosin regulatory light chain 2, skeletal muscle isoform type 1 (Oryctolagus cuniculus (Rabbit)).